Consider the following 333-residue polypeptide: Isopenicillin N synthase (333 aa).

Arg-87, Tyr-91, and Tyr-191 together coordinate isopenicillin N. N-[(5S)-5-amino-5-carboxypentanoyl]-L-cysteinyl-D-valine is bound by residues Arg-87, Tyr-91, Tyr-191, His-216, and Asp-218. The Fe2OG dioxygenase domain occupies 180–290; that stretch reads DTLSCRSLMI…RLSLPFFLHA (111 aa). 3 residues coordinate Fe(2+): His-216, Asp-218, and His-272. Arg-281 provides a ligand contact to 2-oxoglutarate. An isopenicillin N-binding site is contributed by Ser-283. An N-[(5S)-5-amino-5-carboxypentanoyl]-L-cysteinyl-D-valine-binding site is contributed by Ser-283.

It belongs to the iron/ascorbate-dependent oxidoreductase family. Fe cation serves as cofactor. Requires L-ascorbate as cofactor.

The enzyme catalyses N-[(5S)-5-amino-5-carboxypentanoyl]-L-cysteinyl-D-valine + O2 = isopenicillin N + 2 H2O. The protein operates within antibiotic biosynthesis; penicillin G biosynthesis; penicillin G from L-alpha-aminoadipate and L-cysteine and L-valine: step 2/3. Removes, in the presence of oxygen, 4 hydrogen atoms from delta-L-(alpha-aminoadipyl)-L-cysteinyl-D-valine (ACV) to form the azetidinone and thiazolidine rings of isopenicillin. In Streptomyces microflavus (Streptomyces lipmanii), this protein is Isopenicillin N synthase (pcbC).